A 731-amino-acid chain; its full sequence is 1,4-alpha-glucan branching enzyme GlgB (731 aa).

Residue Asp-411 is the Nucleophile of the active site. Glu-464 serves as the catalytic Proton donor.

It belongs to the glycosyl hydrolase 13 family. GlgB subfamily. Monomer.

It carries out the reaction Transfers a segment of a (1-&gt;4)-alpha-D-glucan chain to a primary hydroxy group in a similar glucan chain.. The protein operates within glycan biosynthesis; glycogen biosynthesis. Its function is as follows. Catalyzes the formation of the alpha-1,6-glucosidic linkages in glycogen by scission of a 1,4-alpha-linked oligosaccharide from growing alpha-1,4-glucan chains and the subsequent attachment of the oligosaccharide to the alpha-1,6 position. This chain is 1,4-alpha-glucan branching enzyme GlgB, found in Mycobacterium tuberculosis (strain ATCC 25177 / H37Ra).